A 418-amino-acid polypeptide reads, in one-letter code: NADH-quinone oxidoreductase subunit D (418 aa).

The protein belongs to the complex I 49 kDa subunit family. In terms of assembly, NDH-1 is composed of 14 different subunits. Subunits NuoB, C, D, E, F, and G constitute the peripheral sector of the complex.

It localises to the cell inner membrane. It catalyses the reaction a quinone + NADH + 5 H(+)(in) = a quinol + NAD(+) + 4 H(+)(out). NDH-1 shuttles electrons from NADH, via FMN and iron-sulfur (Fe-S) centers, to quinones in the respiratory chain. The immediate electron acceptor for the enzyme in this species is believed to be ubiquinone. Couples the redox reaction to proton translocation (for every two electrons transferred, four hydrogen ions are translocated across the cytoplasmic membrane), and thus conserves the redox energy in a proton gradient. The polypeptide is NADH-quinone oxidoreductase subunit D (Neisseria meningitidis serogroup A / serotype 4A (strain DSM 15465 / Z2491)).